Here is a 515-residue protein sequence, read N- to C-terminus: Maturase K (515 aa).

Belongs to the intron maturase 2 family. MatK subfamily.

Its subcellular location is the plastid. The protein resides in the chloroplast. Usually encoded in the trnK tRNA gene intron. Probably assists in splicing its own and other chloroplast group II introns. In Pinus armandii (Chinese white pine), this protein is Maturase K.